A 337-amino-acid chain; its full sequence is Transmembrane protein 120B (337 aa).

Residues 1-39 adopt a coiled-coil conformation; sequence MSLERCQSEWTEIEQEYQQLQETHKVYRQKLEELTNLQA. Helical transmembrane passes span 100–122, 130–150, 157–175, 185–205, 268–288, and 300–320; these read GLYL…AKFA, FKLY…FLLN, IFNF…RESI, GWWV…LTWP, FLLP…VTLF, and QVFM…LTTL.

Belongs to the TMEM120 family.

Its subcellular location is the nucleus inner membrane. Necessary for efficient adipogenesis. Does not show ion channel activity. This is Transmembrane protein 120B (tmem120b) from Danio rerio (Zebrafish).